A 316-amino-acid polypeptide reads, in one-letter code: Pantothenate kinase (316 aa).

95 to 102 (GSVAVGKS) lines the ATP pocket.

The protein belongs to the prokaryotic pantothenate kinase family.

It localises to the cytoplasm. The catalysed reaction is (R)-pantothenate + ATP = (R)-4'-phosphopantothenate + ADP + H(+). It participates in cofactor biosynthesis; coenzyme A biosynthesis; CoA from (R)-pantothenate: step 1/5. The polypeptide is Pantothenate kinase (Pectobacterium carotovorum subsp. carotovorum (strain PC1)).